A 115-amino-acid chain; its full sequence is Nitrogenase iron-iron protein delta chain (115 aa).

Hexamer of two alpha, two beta, and two delta chains. Iron-sulfur cluster serves as cofactor.

The catalysed reaction is N2 + 8 reduced [2Fe-2S]-[ferredoxin] + 16 ATP + 16 H2O = H2 + 8 oxidized [2Fe-2S]-[ferredoxin] + 2 NH4(+) + 16 ADP + 16 phosphate + 6 H(+). Functionally, the key enzymatic reactions in nitrogen fixation are catalyzed by the nitrogenase complex, which has 2 components: the iron protein (component 2) and a component 1 which is either a molybdenum-iron protein, a vanadium-iron, or an iron-iron protein. This chain is Nitrogenase iron-iron protein delta chain (anfG), found in Rhodobacter capsulatus (Rhodopseudomonas capsulata).